The following is a 296-amino-acid chain: Acetylglutamate kinase (296 aa).

Residues 69–70 (GG), Arg-91, and Asn-192 contribute to the substrate site.

It belongs to the acetylglutamate kinase family. ArgB subfamily.

The protein localises to the cytoplasm. It carries out the reaction N-acetyl-L-glutamate + ATP = N-acetyl-L-glutamyl 5-phosphate + ADP. It functions in the pathway amino-acid biosynthesis; L-arginine biosynthesis; N(2)-acetyl-L-ornithine from L-glutamate: step 2/4. Functionally, catalyzes the ATP-dependent phosphorylation of N-acetyl-L-glutamate. The protein is Acetylglutamate kinase of Ruthia magnifica subsp. Calyptogena magnifica.